Consider the following 265-residue polypeptide: MADS-box protein JOINTLESS (265 aa).

The MADS-box domain occupies 3–57 (REKIQIKKIDNSTARQVTFSKRRRGLFKKAEELSVLCDADVALIIFSSTGKLFDY). The K-box domain occupies 87-177 (QLVENSNYSR…RQQVMEISNN (91 aa)). Positions 196 to 232 (ENGFNNNNNEDGQSSESVTNPCNSIDPPPQDDDSSDT) are disordered. Residues 205-218 (EDGQSSESVTNPCN) show a composition bias toward polar residues.

In terms of tissue distribution, widely expressed with highest levels in shoot tips and axillary buds. Also found in fully developed pedicels and flowers.

The protein resides in the nucleus. Its function is as follows. Putative transcription factor that coordinates gene expression underlying the differentiation of the pedicel abscission zone. May also be involved in the maintenance of the inflorescence meristem state. This is MADS-box protein JOINTLESS (J) from Solanum lycopersicum (Tomato).